The chain runs to 437 residues: MNYTTQMDAAKKGIVTKEMEIVAKKENMNVKDLMELVSKGKVAIPANKNHKSLDPEGIGQGLRTKINVNLGISKDCYNIDMELEKVQKAIDMKAEAIMDLSCFGKTEEFRKRLIDMSPAIIGTVPIYDAVGFYDKELKDITSEEFLKVAEKHAENGADFLTIHVGMNRKTAATFKKNPRTMNIVSRGGSLLYAWMELNNKENPFYEGFDKLLDICEKYDVTLSLGDACRPGCIEDSTDASQIEELIALGELTKRAWERNVQVIIEGPGHMTLDEIEINMKIEKKLCHGAPFYVLGPIVTDIAPGYDHITSAIGGAIAATHGADFLCYVTPAEHLRLPNLDDMKEGIIASKIAAHAADLAKGVKGARDWDNAMAKARRDLDWERMFELSIDEEKARRYREESKAKSKDSCTMCGKMCAVRNMNRVTEGKDLNMLRDDD.

Substrate is bound by residues Asn-69, Met-98, Tyr-127, His-163, Ser-185–Gly-187, Asp-226–Arg-229, and Glu-265. Zn(2+) is bound at residue His-269. Position 292 (Tyr-292) interacts with substrate. His-333 provides a ligand contact to Zn(2+). 3 residues coordinate [4Fe-4S] cluster: Cys-409, Cys-412, and Cys-416.

This sequence belongs to the ThiC family. The cofactor is [4Fe-4S] cluster.

The catalysed reaction is 5-amino-1-(5-phospho-beta-D-ribosyl)imidazole + S-adenosyl-L-methionine = 4-amino-2-methyl-5-(phosphooxymethyl)pyrimidine + CO + 5'-deoxyadenosine + formate + L-methionine + 3 H(+). The protein operates within cofactor biosynthesis; thiamine diphosphate biosynthesis. In terms of biological role, catalyzes the synthesis of the hydroxymethylpyrimidine phosphate (HMP-P) moiety of thiamine from aminoimidazole ribotide (AIR) in a radical S-adenosyl-L-methionine (SAM)-dependent reaction. The sequence is that of Phosphomethylpyrimidine synthase from Clostridium botulinum (strain Kyoto / Type A2).